We begin with the raw amino-acid sequence, 451 residues long: Serine--tRNA ligase, cytoplasmic (451 aa).

236-238 (TSE) is a binding site for L-serine. ATP contacts are provided by residues 267 to 269 (RKE) and V283. E290 lines the L-serine pocket. 354 to 357 (ELVS) lines the ATP pocket. An L-serine-binding site is contributed by T392.

It belongs to the class-II aminoacyl-tRNA synthetase family. Type-1 seryl-tRNA synthetase subfamily. As to quaternary structure, homodimer. The tRNA molecule binds across the dimer.

The protein localises to the cytoplasm. It catalyses the reaction tRNA(Ser) + L-serine + ATP = L-seryl-tRNA(Ser) + AMP + diphosphate + H(+). It carries out the reaction tRNA(Sec) + L-serine + ATP = L-seryl-tRNA(Sec) + AMP + diphosphate + H(+). It participates in aminoacyl-tRNA biosynthesis; selenocysteinyl-tRNA(Sec) biosynthesis; L-seryl-tRNA(Sec) from L-serine and tRNA(Sec): step 1/1. Its function is as follows. Catalyzes the attachment of serine to tRNA(Ser). Is also able to aminoacylate tRNA(Sec) with serine, to form the misacylated tRNA L-seryl-tRNA(Sec), which will be further converted into selenocysteinyl-tRNA(Sec). In Dictyostelium discoideum (Social amoeba), this protein is Serine--tRNA ligase, cytoplasmic (serS).